A 381-amino-acid polypeptide reads, in one-letter code: Gustatory and pheromone receptor 39a, isoform C (381 aa).

Over 1–37 the chain is Cytoplasmic; it reads MDFQPGELCAYYRLCRYLGIFCIDYNPTKKKFRLRRS. A helical transmembrane segment spans residues 38-58; the sequence is VLCYIVHFALQAYLVGCISVM. The Extracellular portion of the chain corresponds to 59-79; it reads VTYWRRCFKSELTTTGNHFDR. Residues 80 to 100 traverse the membrane as a helical segment; sequence LVMVIALGILVVQNAWLIWLQ. Residues 101-129 are Cytoplasmic-facing; the sequence is APHLRIVRQIEFYRRNHLANVRLLLPKRL. The helical transmembrane segment at 130 to 150 threads the bilayer; it reads LWLIIATNVVYMANFIKTCIF. The Extracellular portion of the chain corresponds to 151–171; that stretch reads EWLTDASRLFVITSLGFPLRY. The chain crosses the membrane as a helical span at residues 172–192; the sequence is LVTSFTMGTYFCMVHIVRLVL. Residues 193–239 lie on the Cytoplasmic side of the membrane; sequence DWNQSQINAIIDESADLKMTSPNRLRLRVCLEMHDRLMLLCNDEISL. Residues 240–260 traverse the membrane as a helical segment; the sequence is VYGFIAWLSWMFASLDVTGVI. Over 261–271 the chain is Extracellular; sequence YLTMVIQTKKS. The chain crosses the membrane as a helical span at residues 272–292; sequence IVLKLITNVVWLSPTFMTCAA. Topologically, residues 293–350 are cytoplasmic; that stretch reads SFMSNRVTIQANKTAKMLTKVPRTGTGLDRMIEKFLLKNLRQKPILTAYGFFALDKST. A helical transmembrane segment spans residues 351–371; the sequence is LFKLFTAIFTYMVILVQFKEM. The Extracellular portion of the chain corresponds to 372–381; the sequence is ENSTKSINKF. Asparagine 373 carries N-linked (GlcNAc...) asparagine glycosylation.

Belongs to the insect chemoreceptor superfamily. Gustatory receptor (GR) family. Gr21a subfamily. Expressed in the adult labellar chemosensory neurons. In larvae, is expressed in neurons of the terminal external chemosensory organ, as well as in the dorsal pharyngeal sense organ.

It is found in the cell membrane. Its function is as follows. Gustatory receptor which mediates acceptance or avoidance behavior, depending on its substrates. Plays a role in sustaining courtship behavior in males, possibly through the reception of a stimulating arrestant pheromone. This chain is Gustatory and pheromone receptor 39a, isoform C (Gr39a), found in Drosophila melanogaster (Fruit fly).